Reading from the N-terminus, the 857-residue chain is MSNSSARPESLGEYLAHLPLSDEQRAELASCTSFSELHQRLAANPAASSAEAVQASVGPRLTVGSAAELEEAEMLGVDGSGRLCLKIAPPIKRTKVVPEPWRTNVLIRMWRRMTGRPNAPQPPKRELPPARWRTVGSIRRYILLALMIGQTIVAGWYMKGILPYQGWSFVDFDEIVNQPLWDTVVQVWPYALQTSILILFGILFCWVSAGFWTALMGFLELLTGRDKYKISGSSAGNEPIAPEARTALVMPICNEDVPRVFAGLRATFESVAASGNLDRFDFFVLSDTNDTDIAVAEQQAWLDVCRETKGFGRIFYRRRRRRVKRKSGNLDDFCRRWGGEYKYMVVLDADSVMSGECLSSLVRLMEANPDAGIIQTGPKASGMDTLYARMQQFATRVYGPLFTAGLHFWQLGESHYWGHNAIIRMKPFIEHCALAPLPGKGAFAGAILSHDFVEAALMRRAGWGVWIAYDLPGSYEELPPNLLDELKRDRRWCHGNLMNFRLFLVKGMHPVHRAVFLTGVMSYLSAPLWFLFLVLSTALLATNTLMEPQYFIEPYQLYPLWPQWHPEKAVALFSTTIVLLFLPKLLSVILIWAKGAVEYGGRVKVTLSMLMEMLFSMLLAPVRMIFHTRFVLAAFLGWAATWNSPQRDDDSTPWGEAVRRHGPQTLLGIAWAALVAWLNPSFLWWLAPIVGSLVLSIPVSVISSRTRLGLAAKDEKLFLIPEEYATPQELLATDQYTHENRWHALHDGFVRAVVDPRQNALACAMATARHGQAAPIEALRAERVAKAIEVGPKGLDLNTRLALLSDPVALSRLHEQVWAEHNAAWIDVWRASINNDPHSPLLPLHPENAGQPSLVGA.

6 consecutive transmembrane segments (helical) span residues 141 to 158, 197 to 219, 514 to 536, 570 to 592, 605 to 627, and 681 to 703; these read YILL…GWYM, LILF…MGFL, AVFL…LVLS, VALF…ILIW, VTLS…MIFH, and SFLW…SVIS.

Belongs to the glycosyltransferase 2 family. OpgH subfamily.

Its subcellular location is the cell inner membrane. Its pathway is glycan metabolism; osmoregulated periplasmic glucan (OPG) biosynthesis. Involved in the biosynthesis of osmoregulated periplasmic glucans (OPGs). The polypeptide is Glucans biosynthesis glucosyltransferase H (Pseudomonas putida (strain ATCC 47054 / DSM 6125 / CFBP 8728 / NCIMB 11950 / KT2440)).